A 491-amino-acid chain; its full sequence is Polybrominated aromatic compounds synthase (491 aa).

Cys-437 is a heme binding site.

It belongs to the cytochrome P450 family. Heme serves as cofactor.

Cytochrome P450 protein involved in the biosynthesis of polybrominated aromatic organic compounds. In the presence of ferredoxin, ferredoxin reductase and NADH, catalyzes the coupling of bromophenols and bromopyrroles, forming various polybrominated biphenyls and hydroxylated polybrominated diphenyl ethers (OH-BDE). Can also mediate the heterocoupling of 3,5-dibromocatechol. Can also use chlorinated phenolic substrates. 2,3,4-tribromopyrrole could be the physiological substrate. In Pseudoalteromonas luteoviolacea (strain 2ta16), this protein is Polybrominated aromatic compounds synthase.